The chain runs to 742 residues: Enhancer of polycomb-like protein 1 (742 aa).

Over residues 1–27 (MPTPSAQLDQGIISSNGGTSGVSASST) the composition is skewed to polar residues. Disordered stretches follow at residues 1-28 (MPTPSAQLDQGIISSNGGTSGVSASSTR), 416-446 (RQQSQLQKLDQQQRQQQQQQQPQINGAQCQQ), and 718-742 (KKLVNAQRQQQQQQQEQQEQEHQQA). The span at 724-734 (QRQQQQQQQEQ) shows a compositional bias: low complexity.

The protein belongs to the enhancer of polycomb family. As to quaternary structure, component of the NuA4 histone acetyltransferase complex.

It localises to the nucleus. In terms of biological role, component of the NuA4 histone acetyltransferase complex which is involved in transcriptional activation of selected genes principally by acetylation of nucleosomal histone H4 and H2A. The NuA4 complex is also involved in DNA repair. Involved in gene silencing by neighboring heterochromatin, blockage of the silencing spreading along the chromosome, and required for cell cycle progression through G2/M. This is Enhancer of polycomb-like protein 1 (EPL1) from Eremothecium gossypii (strain ATCC 10895 / CBS 109.51 / FGSC 9923 / NRRL Y-1056) (Yeast).